Here is an 811-residue protein sequence, read N- to C-terminus: Lysine-specific histone demethylase 1 homolog 3 (811 aa).

Residues Met-1–Pro-10 are compositionally biased toward pro residues. Residues Met-1–Ser-79 form a disordered region. The span at Asn-44–Leu-55 shows a compositional bias: basic residues. Low complexity predominate over residues Pro-56–Ser-71. Residues Asn-88–Arg-189 form the SWIRM domain. FAD-binding residues include Glu-227, Arg-229, Arg-235, and Glu-609. The interval Arg-790 to Ser-811 is disordered.

This sequence belongs to the flavin monoamine oxidase family. Requires FAD as cofactor.

Probable histone demethylase. This is Lysine-specific histone demethylase 1 homolog 3 from Oryza sativa subsp. japonica (Rice).